A 76-amino-acid polypeptide reads, in one-letter code: Omega-conotoxin-like TxO5 (76 aa).

An N-terminal signal peptide occupies residues 1–22 (MKLTCMVIVAVLFLTAWTFVTA). Positions 23–50 (ITSNGLENLFPNAHHEMKNPEASKLNKR) are excised as a propeptide. Cystine bridges form between Cys-51-Cys-66, Cys-58-Cys-70, and Cys-65-Cys-75.

The protein belongs to the conotoxin O1 superfamily. Expressed by the venom duct.

It localises to the secreted. Its function is as follows. Omega-conotoxins act at presynaptic membranes, they bind and block voltage-gated calcium channels (Cav). The sequence is that of Omega-conotoxin-like TxO5 (TXO5) from Conus textile (Cloth-of-gold cone).